Here is a 289-residue protein sequence, read N- to C-terminus: 4-hydroxy-3-methylbut-2-enyl diphosphate reductase (289 aa).

C13 contributes to the [4Fe-4S] cluster binding site. Positions 41 and 75 each coordinate (2E)-4-hydroxy-3-methylbut-2-enyl diphosphate. Residues H41 and H75 each coordinate dimethylallyl diphosphate. Residues H41 and H75 each contribute to the isopentenyl diphosphate site. Residue C97 coordinates [4Fe-4S] cluster. H129 contacts (2E)-4-hydroxy-3-methylbut-2-enyl diphosphate. H129 contacts dimethylallyl diphosphate. H129 provides a ligand contact to isopentenyl diphosphate. The Proton donor role is filled by E131. T167 provides a ligand contact to (2E)-4-hydroxy-3-methylbut-2-enyl diphosphate. A [4Fe-4S] cluster-binding site is contributed by C198. The (2E)-4-hydroxy-3-methylbut-2-enyl diphosphate site is built by S226, S227, N228, and S270. Dimethylallyl diphosphate contacts are provided by S226, S227, N228, and S270. Isopentenyl diphosphate contacts are provided by S226, S227, N228, and S270.

This sequence belongs to the IspH family. [4Fe-4S] cluster is required as a cofactor.

The enzyme catalyses isopentenyl diphosphate + 2 oxidized [2Fe-2S]-[ferredoxin] + H2O = (2E)-4-hydroxy-3-methylbut-2-enyl diphosphate + 2 reduced [2Fe-2S]-[ferredoxin] + 2 H(+). The catalysed reaction is dimethylallyl diphosphate + 2 oxidized [2Fe-2S]-[ferredoxin] + H2O = (2E)-4-hydroxy-3-methylbut-2-enyl diphosphate + 2 reduced [2Fe-2S]-[ferredoxin] + 2 H(+). It functions in the pathway isoprenoid biosynthesis; dimethylallyl diphosphate biosynthesis; dimethylallyl diphosphate from (2E)-4-hydroxy-3-methylbutenyl diphosphate: step 1/1. The protein operates within isoprenoid biosynthesis; isopentenyl diphosphate biosynthesis via DXP pathway; isopentenyl diphosphate from 1-deoxy-D-xylulose 5-phosphate: step 6/6. Catalyzes the conversion of 1-hydroxy-2-methyl-2-(E)-butenyl 4-diphosphate (HMBPP) into a mixture of isopentenyl diphosphate (IPP) and dimethylallyl diphosphate (DMAPP). Acts in the terminal step of the DOXP/MEP pathway for isoprenoid precursor biosynthesis. The polypeptide is 4-hydroxy-3-methylbut-2-enyl diphosphate reductase (Bacteroides thetaiotaomicron (strain ATCC 29148 / DSM 2079 / JCM 5827 / CCUG 10774 / NCTC 10582 / VPI-5482 / E50)).